A 272-amino-acid polypeptide reads, in one-letter code: Oligodendrocyte transcription factor 3 (272 aa).

Positions 1–14 are enriched in low complexity; that stretch reads MNSDSSSVSSRASS. Positions 1-71 are disordered; that stretch reads MNSDSSSVSS…KAAGESSKYK (71 aa). The segment covering 24 to 33 has biased composition (basic residues); sequence DHHHRHHHHQ. The segment covering 36 to 46 has biased composition (polar residues); that stretch reads RLNSVSSTQGD. Positions 68-89 form a coiled coil; sequence SKYKIKKQLSEQDLQQLRLKIN. The bHLH domain maps to 83–137; that stretch reads QLRLKINGRERKRMHDLNLAMDGLREVMPYAHGPSVRKLSKIATLLLARNYILML.

It is found in the nucleus. In terms of biological role, may determine the distinct specification program of class A neurons in the dorsal part of the spinal cord and suppress specification of class B neurons. The protein is Oligodendrocyte transcription factor 3 (OLIG3) of Homo sapiens (Human).